We begin with the raw amino-acid sequence, 180 residues long: tRNA (cytidine(56)-2'-O)-methyltransferase (180 aa).

S-adenosyl-L-methionine contacts are provided by residues L84 and 112–116 (GAEKV).

This sequence belongs to the aTrm56 family. Homodimer.

The protein localises to the cytoplasm. The catalysed reaction is cytidine(56) in tRNA + S-adenosyl-L-methionine = 2'-O-methylcytidine(56) in tRNA + S-adenosyl-L-homocysteine + H(+). In terms of biological role, specifically catalyzes the AdoMet-dependent 2'-O-ribose methylation of cytidine at position 56 in tRNAs. This is tRNA (cytidine(56)-2'-O)-methyltransferase from Natronomonas pharaonis (strain ATCC 35678 / DSM 2160 / CIP 103997 / JCM 8858 / NBRC 14720 / NCIMB 2260 / Gabara) (Halobacterium pharaonis).